A 260-amino-acid chain; its full sequence is Ras-related protein Rab-32B (260 aa).

A disordered region spans residues 11-50 (FDTDPDVSTDSNYNNNNNSNNNNSIISNSNNNNNNNNNNV). Residues 21–49 (SNYNNNNNSNNNNSIISNSNNNNNNNNNN) are compositionally biased toward low complexity. 66–73 (GDYAVGKS) is a GTP binding site. The Effector region signature appears at 88-96 (YKLTIGVDF). GTP is bound by residues 115 to 119 (DIAGH) and 177 to 180 (NKSD). Positions 231 to 260 (TNHPPKPEEDTLELTKTNGEKSDDSKSCCK) are disordered. Residues 248-260 (NGEKSDDSKSCCK) are compositionally biased toward basic and acidic residues. S-geranylgeranyl cysteine attachment occurs at residues Cys-258 and Cys-259.

The protein belongs to the small GTPase superfamily. Rab family.

This chain is Ras-related protein Rab-32B (rab32B), found in Dictyostelium discoideum (Social amoeba).